Here is a 258-residue protein sequence, read N- to C-terminus: GTP cyclohydrolase FolE2 (258 aa).

The protein belongs to the GTP cyclohydrolase IV family.

The enzyme catalyses GTP + H2O = 7,8-dihydroneopterin 3'-triphosphate + formate + H(+). It functions in the pathway cofactor biosynthesis; 7,8-dihydroneopterin triphosphate biosynthesis; 7,8-dihydroneopterin triphosphate from GTP: step 1/1. Its function is as follows. Converts GTP to 7,8-dihydroneopterin triphosphate. The sequence is that of GTP cyclohydrolase FolE2 from Lawsonia intracellularis (strain PHE/MN1-00).